Reading from the N-terminus, the 270-residue chain is DNA adenine methylase (270 aa).

Tryptophan 10, lysine 14, aspartate 54, and aspartate 181 together coordinate S-adenosyl-L-methionine.

The protein belongs to the N(4)/N(6)-methyltransferase family.

The enzyme catalyses a 2'-deoxyadenosine in DNA + S-adenosyl-L-methionine = an N(6)-methyl-2'-deoxyadenosine in DNA + S-adenosyl-L-homocysteine + H(+). In terms of biological role, an alpha subtype methylase, recognizes the double-stranded sequence 5'-GATC-3' and methylates A-2. Overexpression leads to hypermutability. May be involved in methyl-directed DNA mismatch repair, initiation of chromosome replication and gene expression. The protein is DNA adenine methylase of Serratia marcescens.